Reading from the N-terminus, the 66-residue chain is MAKSKDARVAVILECTSCIRNSVNKVLTGISRYITQKNRRNTPNRLELRKFCPYCYKHMIHGEIKK.

This sequence belongs to the bacterial ribosomal protein bL33 family.

It localises to the plastid. This Epifagus virginiana (Beechdrops) protein is Large ribosomal subunit protein bL33c (rpl33).